We begin with the raw amino-acid sequence, 703 residues long: Elongation factor G (703 aa).

The 284-residue stretch at 9 to 292 (ERTRNIGIMA…AVVDYLPGPL (284 aa)) folds into the tr-type G domain. GTP is bound by residues 18–25 (AHIDAGKT), 91–95 (DTPGH), and 145–148 (NKMD).

Belongs to the TRAFAC class translation factor GTPase superfamily. Classic translation factor GTPase family. EF-G/EF-2 subfamily.

It is found in the cytoplasm. Catalyzes the GTP-dependent ribosomal translocation step during translation elongation. During this step, the ribosome changes from the pre-translocational (PRE) to the post-translocational (POST) state as the newly formed A-site-bound peptidyl-tRNA and P-site-bound deacylated tRNA move to the P and E sites, respectively. Catalyzes the coordinated movement of the two tRNA molecules, the mRNA and conformational changes in the ribosome. The protein is Elongation factor G of Leuconostoc mesenteroides subsp. mesenteroides (strain ATCC 8293 / DSM 20343 / BCRC 11652 / CCM 1803 / JCM 6124 / NCDO 523 / NBRC 100496 / NCIMB 8023 / NCTC 12954 / NRRL B-1118 / 37Y).